Here is a 322-residue protein sequence, read N- to C-terminus: tRNA-modifying protein YgfZ (322 aa).

A folate-binding site is contributed by W182.

The protein belongs to the tRNA-modifying YgfZ family.

It localises to the cytoplasm. Folate-binding protein involved in regulating the level of ATP-DnaA and in the modification of some tRNAs. It is probably a key factor in regulatory networks that act via tRNA modification, such as initiation of chromosomal replication. This Vibrio parahaemolyticus serotype O3:K6 (strain RIMD 2210633) protein is tRNA-modifying protein YgfZ.